We begin with the raw amino-acid sequence, 118 residues long: MARVKRGVVARARHKKILKQAKGYYGARSRVYRVAFQAVIKAGQYAYRDRRQKKRQFRQLWIARINAAARQNGISYSRFINGLKKASIEIDRKILADIAVFDKVAFAALADKAKGDLV.

The protein belongs to the bacterial ribosomal protein bL20 family.

In terms of biological role, binds directly to 23S ribosomal RNA and is necessary for the in vitro assembly process of the 50S ribosomal subunit. It is not involved in the protein synthesizing functions of that subunit. This Sodalis glossinidius (strain morsitans) protein is Large ribosomal subunit protein bL20.